The chain runs to 534 residues: Inorganic phosphate transporter 1-4 (534 aa).

Over methionine 1–alanine 24 the chain is Cytoplasmic. A helical membrane pass occupies residues isoleucine 25–valine 45. Residues threonine 46–alanine 70 lie on the Extracellular side of the membrane. A helical transmembrane segment spans residues alanine 71 to leucine 91. Topologically, residues glycine 92–lysine 99 are cytoplasmic. A helical transmembrane segment spans residues valine 100–glycine 120. At histidine 121–cysteine 131 the chain is on the extracellular side. The chain crosses the membrane as a helical span at residues phenylalanine 132–methionine 152. At serine 153 to arginine 161 the chain is on the cytoplasmic side. The helical transmembrane segment at glycine 162–phenylalanine 182 threads the bilayer. Residues alanine 183 to alanine 211 lie on the Extracellular side of the membrane. Residues aspartate 212–serine 232 form a helical membrane-spanning segment. Residues arginine 233–arginine 293 are Cytoplasmic-facing. Residues histidine 294–serine 314 form a helical membrane-spanning segment. The Extracellular segment spans residues glutamine 315 to threonine 349. The chain crosses the membrane as a helical span at residues leucine 350 to isoleucine 370. Residues glycine 371–arginine 372 are Cytoplasmic-facing. A helical transmembrane segment spans residues phenylalanine 373–proline 393. Topologically, residues tyrosine 394–arginine 403 are extracellular. Residues isoleucine 404–threonine 424 form a helical membrane-spanning segment. Topologically, residues threonine 425 to histidine 442 are cytoplasmic. The helical transmembrane segment at glycine 443–leucine 463 threads the bilayer. Over alanine 464–asparagine 484 the chain is Extracellular. A helical membrane pass occupies residues serine 485–glutamate 505. The Cytoplasmic segment spans residues serine 506–valine 534. A disordered region spans residues glutamate 512–valine 534. Serine 524 and serine 528 each carry phosphoserine.

It belongs to the major facilitator superfamily. Phosphate:H(+) symporter (TC 2.A.1.9) family. Interacts with NLA. Ubiquitinated by NLA. Ubiquitination of PHT1-4 leads to its degradation by the proteasome. Mostly expressed in roots, in tissues connecting the lateral roots to the primary root. Also present in flowers, in senescing anther filaments and in the abscission zone at the base of siliques. Expressed in hydathodes and axillary buds, and in some senescing leaves. After Pi starvation, localized in all cells of undifferentiated root segments, including root tips and root hairs, and in the epidermis, cortex and stellar regions of mature root segments.

The protein resides in the cell membrane. In terms of biological role, high-affinity transporter for external inorganic phosphate. Acts as a H(+):phosphate symporter in both low- and high-Pi conditions. Confers sensitivity to arsenate. The protein is Inorganic phosphate transporter 1-4 (PHT1-4) of Arabidopsis thaliana (Mouse-ear cress).